Reading from the N-terminus, the 350-residue chain is UDP-3-O-acylglucosamine N-acyltransferase (350 aa).

The active-site Proton acceptor is histidine 257.

Belongs to the transferase hexapeptide repeat family. LpxD subfamily. In terms of assembly, homotrimer.

The enzyme catalyses a UDP-3-O-[(3R)-3-hydroxyacyl]-alpha-D-glucosamine + a (3R)-hydroxyacyl-[ACP] = a UDP-2-N,3-O-bis[(3R)-3-hydroxyacyl]-alpha-D-glucosamine + holo-[ACP] + H(+). It functions in the pathway bacterial outer membrane biogenesis; LPS lipid A biosynthesis. Catalyzes the N-acylation of UDP-3-O-acylglucosamine using 3-hydroxyacyl-ACP as the acyl donor. Is involved in the biosynthesis of lipid A, a phosphorylated glycolipid that anchors the lipopolysaccharide to the outer membrane of the cell. The protein is UDP-3-O-acylglucosamine N-acyltransferase of Chelativorans sp. (strain BNC1).